Here is a 159-residue protein sequence, read N- to C-terminus: RNA pyrophosphohydrolase (159 aa).

Residues 6-149 (GFRPNVGIIL…KREVYRRALK (144 aa)) enclose the Nudix hydrolase domain. A Nudix box motif is present at residues 38 to 59 (GGINPDETPEDALYRELNEEVG).

The protein belongs to the Nudix hydrolase family. RppH subfamily. The cofactor is a divalent metal cation.

Accelerates the degradation of transcripts by removing pyrophosphate from the 5'-end of triphosphorylated RNA, leading to a more labile monophosphorylated state that can stimulate subsequent ribonuclease cleavage. The chain is RNA pyrophosphohydrolase from Pseudomonas fluorescens (strain SBW25).